Consider the following 312-residue polypeptide: Serine acetyltransferase 5 (312 aa).

Residues 1 to 17 (MPPAGELRHQSPSKEKL) are compositionally biased toward basic and acidic residues. A disordered region spans residues 1 to 25 (MPPAGELRHQSPSKEKLSSVTQSDE).

Belongs to the transferase hexapeptide repeat family. Homomultimer. In terms of tissue distribution, mostly expressed in stems, flowers and siliques. Localized in vascular tissues, particularly in phloem.

The protein resides in the cytoplasm. It carries out the reaction L-serine + acetyl-CoA = O-acetyl-L-serine + CoA. Its pathway is amino-acid biosynthesis; L-cysteine biosynthesis; L-cysteine from L-serine: step 1/2. Its activity is regulated as follows. Feedback inhibitions by L-Ser and acetyl-CoA. The protein is Serine acetyltransferase 5 (SAT5) of Arabidopsis thaliana (Mouse-ear cress).